The sequence spans 343 residues: L-threonine 3-dehydrogenase (343 aa).

Cysteine 40 serves as a coordination point for Zn(2+). Catalysis depends on charge relay system residues threonine 42 and histidine 45. Zn(2+) is bound by residues histidine 65, glutamate 66, cysteine 95, cysteine 98, cysteine 101, and cysteine 109. Residues isoleucine 177, aspartate 197, arginine 202, 264–266, and 288–289 contribute to the NAD(+) site; these read LGI and IY.

Belongs to the zinc-containing alcohol dehydrogenase family. In terms of assembly, homotetramer. Zn(2+) serves as cofactor.

The protein localises to the cytoplasm. The catalysed reaction is L-threonine + NAD(+) = (2S)-2-amino-3-oxobutanoate + NADH + H(+). It functions in the pathway amino-acid degradation; L-threonine degradation via oxydo-reductase pathway; glycine from L-threonine: step 1/2. In terms of biological role, catalyzes the NAD(+)-dependent oxidation of L-threonine to 2-amino-3-ketobutyrate. This is L-threonine 3-dehydrogenase from Vibrio atlanticus (strain LGP32) (Vibrio splendidus (strain Mel32)).